The following is a 288-amino-acid chain: Fatty acid-binding protein TM_1468 (288 aa).

Positions 3–283 constitute a DegV domain; it reads VKILVDSTAD…PGTVGFGIEV (281 aa). Hexadecanoate-binding residues include T63 and S96.

As to quaternary structure, monomer.

Binds long-chain fatty acids, such as palmitate, and may play a role in lipid transport or fatty acid metabolism. The polypeptide is Fatty acid-binding protein TM_1468 (Thermotoga maritima (strain ATCC 43589 / DSM 3109 / JCM 10099 / NBRC 100826 / MSB8)).